A 464-amino-acid chain; its full sequence is Siroheme synthase (464 aa).

The tract at residues 1–203 (MDYLPLFHKL…GQGAEAERLL (203 aa)) is precorrin-2 dehydrogenase /sirohydrochlorin ferrochelatase. NAD(+) contacts are provided by residues 22–23 (EI) and 43–44 (PE). Position 128 is a phosphoserine (serine 128). The tract at residues 216–464 (GEVYLVGAGP…AWFEGSQQDQ (249 aa)) is uroporphyrinogen-III C-methyltransferase. Proline 225 contributes to the S-adenosyl-L-methionine binding site. Aspartate 248 (proton acceptor) is an active-site residue. The active-site Proton donor is lysine 270. Residues 301-303 (GGD), isoleucine 306, 331-332 (TA), methionine 383, and glycine 412 contribute to the S-adenosyl-L-methionine site.

In the N-terminal section; belongs to the precorrin-2 dehydrogenase / sirohydrochlorin ferrochelatase family. This sequence in the C-terminal section; belongs to the precorrin methyltransferase family.

It carries out the reaction uroporphyrinogen III + 2 S-adenosyl-L-methionine = precorrin-2 + 2 S-adenosyl-L-homocysteine + H(+). It catalyses the reaction precorrin-2 + NAD(+) = sirohydrochlorin + NADH + 2 H(+). The catalysed reaction is siroheme + 2 H(+) = sirohydrochlorin + Fe(2+). It functions in the pathway cofactor biosynthesis; adenosylcobalamin biosynthesis; precorrin-2 from uroporphyrinogen III: step 1/1. The protein operates within cofactor biosynthesis; adenosylcobalamin biosynthesis; sirohydrochlorin from precorrin-2: step 1/1. Its pathway is porphyrin-containing compound metabolism; siroheme biosynthesis; precorrin-2 from uroporphyrinogen III: step 1/1. It participates in porphyrin-containing compound metabolism; siroheme biosynthesis; siroheme from sirohydrochlorin: step 1/1. It functions in the pathway porphyrin-containing compound metabolism; siroheme biosynthesis; sirohydrochlorin from precorrin-2: step 1/1. Its function is as follows. Multifunctional enzyme that catalyzes the SAM-dependent methylations of uroporphyrinogen III at position C-2 and C-7 to form precorrin-2 via precorrin-1. Then it catalyzes the NAD-dependent ring dehydrogenation of precorrin-2 to yield sirohydrochlorin. Finally, it catalyzes the ferrochelation of sirohydrochlorin to yield siroheme. The polypeptide is Siroheme synthase (Pseudomonas putida (strain W619)).